A 558-amino-acid chain; its full sequence is Urease subunit alpha 2 (558 aa).

The 430-residue stretch at 129–558 (GAVDTHVHLL…SVSLNRLYFL (430 aa)) folds into the Urease domain. 3 residues coordinate Ni(2+): H134, H136, and K214. K214 bears the N6-carboxylysine mark. H216 provides a ligand contact to substrate. Ni(2+) contacts are provided by H243 and H269. Residue H317 is the Proton donor of the active site. D357 contacts Ni(2+).

Belongs to the metallo-dependent hydrolases superfamily. Urease alpha subunit family. May form a heterohexamer of 3 UreC (alpha) and 3 UreAB (gamma/beta) subunits. May also form a heterotrimer of UreA (gamma), UreB (beta) and UreC (alpha) subunits. Three heterotrimers associate to form the active enzyme. Ni cation is required as a cofactor. Carboxylation allows a single lysine to coordinate two nickel ions.

Its subcellular location is the cytoplasm. The catalysed reaction is urea + 2 H2O + H(+) = hydrogencarbonate + 2 NH4(+). It participates in nitrogen metabolism; urea degradation; CO(2) and NH(3) from urea (urease route): step 1/1. This is Urease subunit alpha 2 from Streptomyces coelicolor (strain ATCC BAA-471 / A3(2) / M145).